Consider the following 493-residue polypeptide: MAENLVNTFVTQVIENSDYEELDRIYLTNKVFTLVGEGVADVETDSSELIDLKDQLLQAGVKAGSVGELNEEQDIIGAQLMDLITPRPSVVNRNFWDTYKSNPEQAIADFYAQSKRNDYVKVKAIAQNIAYKAPTKYGDLEITINLSKPEKDPKAIAAAKNAVASDYPKCQLCMENEGYLGRINHPARSNHRVVRFQMEDKEWGFQYSPYAYFNEHSIFFYGKHEPMHISPLTFGRLLTIVEAFPGYFAGSNADLPIVGGSILTHEHYQGGRHTFPMEVAGIKEKVSFDGYSDVEAGIVNWPMSVLRLRSEDKERLIALATKILNCWRGYSDEKAGVLAESDGQPHHTITPIARRKDGKFELDLVLRDNQTSEEYPDGIYHPHKDVQHIKKENIGLIEVMGLAILPPRLKTELKDVEDYLLGQGNQVAPIHQEWADELKAQNPNITAEEVTEVVRQSVADIFARVLEDAGVYKTNSEGLDQFKAFVDFVNLAD.

Belongs to the galactose-1-phosphate uridylyltransferase type 2 family.

It is found in the cytoplasm. The enzyme catalyses alpha-D-galactose 1-phosphate + UDP-alpha-D-glucose = alpha-D-glucose 1-phosphate + UDP-alpha-D-galactose. It participates in carbohydrate metabolism; galactose metabolism. The chain is Galactose-1-phosphate uridylyltransferase from Streptococcus thermophilus (strain CNRZ 1066).